The following is a 401-amino-acid chain: Phosphoglycerate kinase (401 aa).

Substrate contacts are provided by residues 21 to 23, Arg-37, 60 to 63, Arg-119, and Arg-152; these read DLN and HLGR. ATP-binding positions include Lys-203, Glu-325, and 351–354; that span reads GGDT.

It belongs to the phosphoglycerate kinase family. Monomer.

It is found in the cytoplasm. It carries out the reaction (2R)-3-phosphoglycerate + ATP = (2R)-3-phospho-glyceroyl phosphate + ADP. Its pathway is carbohydrate degradation; glycolysis; pyruvate from D-glyceraldehyde 3-phosphate: step 2/5. The sequence is that of Phosphoglycerate kinase from Acidithiobacillus ferrooxidans (strain ATCC 23270 / DSM 14882 / CIP 104768 / NCIMB 8455) (Ferrobacillus ferrooxidans (strain ATCC 23270)).